The sequence spans 82 residues: NAD(P)H-quinone oxidoreductase subunit O, organellar chromatophore (82 aa).

This sequence belongs to the complex I NdhO subunit family. As to quaternary structure, NDH-1 can be composed of about 15 different subunits; different subcomplexes with different compositions have been identified which probably have different functions.

Its subcellular location is the plastid. It is found in the organellar chromatophore thylakoid membrane. The enzyme catalyses a plastoquinone + NADH + (n+1) H(+)(in) = a plastoquinol + NAD(+) + n H(+)(out). The catalysed reaction is a plastoquinone + NADPH + (n+1) H(+)(in) = a plastoquinol + NADP(+) + n H(+)(out). Functionally, NDH-1 shuttles electrons from an unknown electron donor, via FMN and iron-sulfur (Fe-S) centers, to quinones in the respiratory and/or the photosynthetic chain. The immediate electron acceptor for the enzyme in this species is believed to be plastoquinone. Couples the redox reaction to proton translocation, and thus conserves the redox energy in a proton gradient. Cyanobacterial NDH-1 also plays a role in inorganic carbon-concentration. This Paulinella chromatophora protein is NAD(P)H-quinone oxidoreductase subunit O, organellar chromatophore.